The primary structure comprises 534 residues: Kelch repeat and BTB domain-containing protein 4 (534 aa).

The BTB domain maps to 61-128 (ADVTISVEGR…IYHGTVKLRA (68 aa)). The BACK domain occupies 163 to 255 (CLQVMWLADR…SLKEIGENVH (93 aa)). Kelch repeat units follow at residues 255 to 301 (HIYL…KHGG), 302 to 344 (DLYV…SVPG), 347 to 394 (AIYS…NLNG), 396 to 446 (IYLL…VHKD), and 448 to 497 (VFIV…VFRD).

As to quaternary structure, component of the BCR(KBTBD4) E3 ubiquitin ligase complex, at least composed of CUL3, KBTBD4 and RBX1.

Its function is as follows. Substrate-specific adapter of a BCR (BTB-CUL3-RBX1) E3 ubiquitin ligase complex which targets CoREST corepressor complex components RCOR1, KDM1A/LSD1 and HDAC2 for proteasomal degradation. RCOR1 is likely to be the primary target while degradation of KDM1A and HDAC2 is likely due to their association with RCOR1. Also targets RCOR3, MIER2 and MIER3 for proteasomal degradation as well as associated proteins ZNF217 and RREB1. Degradation is dependent on the presence of an ELM2 domain in the target proteins. The protein is Kelch repeat and BTB domain-containing protein 4 (Kbtbd4) of Mus musculus (Mouse).